We begin with the raw amino-acid sequence, 152 residues long: UPF0178 protein Shewmr7_1635 (152 aa).

This sequence belongs to the UPF0178 family.

This is UPF0178 protein Shewmr7_1635 from Shewanella sp. (strain MR-7).